Consider the following 533-residue polypeptide: Lysophosphatidylcholine acyltransferase (533 aa).

Residues 1–79 (MTTSTIKPTG…VLTVLLLPIR (79 aa)) lie on the Cytoplasmic side of the membrane. The helical; Signal-anchor for type II membrane protein transmembrane segment at 80-100 (VVGCVLSLISAWMFACIGLYG) threads the bilayer. At 101–533 (MTLDDLKAKP…PKAVVTTAEN (433 aa)) the chain is on the lumenal side. Residues 158–163 (HSSYVD) carry the HXXXXD motif motif. EF-hand domains are found at residues 402 to 437 (LKNT…CKLK), 439 to 474 (SDLL…AGGK), and 475 to 510 (LNEQ…QKSS).

It belongs to the 1-acyl-sn-glycerol-3-phosphate acyltransferase family.

It localises to the endoplasmic reticulum membrane. The protein resides in the golgi apparatus membrane. It is found in the lipid droplet. It catalyses the reaction a 1-acyl-sn-glycero-3-phosphocholine + an acyl-CoA = a 1,2-diacyl-sn-glycero-3-phosphocholine + CoA. The protein operates within lipid metabolism; phospholipid metabolism. Functionally, acetyltransferase which mediates the conversion of 1-acyl-sn-glycero-3-phosphocholine (LPC) into phosphatidylcholine (PC). Has a calcium-independent activity. Displays a clear preference for saturated fatty acyl-CoAs, and 1-myristoyl or 1-palmitoyl LPC as acyl donors and acceptors, respectively. Involved in the regulation of lipid droplet number and size. The chain is Lysophosphatidylcholine acyltransferase from Drosophila melanogaster (Fruit fly).